The sequence spans 450 residues: Coiled-coil domain-containing protein 149-A (450 aa).

Coiled coils occupy residues methionine 1–lysine 197 and isoleucine 259–serine 286. Residues serine 290 to glutamate 358 form a disordered region. The segment covering proline 343–threonine 354 has biased composition (polar residues).

Belongs to the CCDC149 family.

In Danio rerio (Zebrafish), this protein is Coiled-coil domain-containing protein 149-A (ccdc149a).